A 200-amino-acid polypeptide reads, in one-letter code: Inner membrane-spanning protein YciB (200 aa).

Helical transmembrane passes span 32 to 52 (FVAT…SYVV), 56 to 76 (VPLM…LTLV), 93 to 113 (LFAV…AILF), 126 to 146 (FLTI…EVIW), and 153 to 173 (FWVA…AMTQ).

This sequence belongs to the YciB family.

It is found in the cell inner membrane. In terms of biological role, plays a role in cell envelope biogenesis, maintenance of cell envelope integrity and membrane homeostasis. The protein is Inner membrane-spanning protein YciB of Afipia carboxidovorans (strain ATCC 49405 / DSM 1227 / KCTC 32145 / OM5) (Oligotropha carboxidovorans).